Reading from the N-terminus, the 702-residue chain is MARKTPIERYRNIGISAHIDAGKTTTTERVLFYTGVNHKLGEVHDGAATMDWMEQEQERGITITSAATTCFWKGMAGNFPAHHINIIDTPGHVDFTIEVERSMRVLDGACMVYCAVGGVQPQSETVWRQANKYKVPRLAFVNKMDRTGANFFKVYDQMRARLKANPVPMQVPIGAEDSFEGVIDLVKMKAIIWDDASQGMKFEYGDIPEHLLADAKKWRENMVEAAAEASEELMNKYLEEGDLSEADIKAAIRQRTIASEIVPMMCGTAFKNKGVQAMLDGVVEYLPSPVDIPPVPGLNEDDEPVVRKAEDTEKFSALAFKIATDPFVGQLCFIRCYSGTLNSGDTVFNSVKEKKERIGRIVQMHANQREEIKEMLAGDIAAIVGLKDTTTGDTLCDDKAIVVLERMIFPEPVISQAVEPKTKADQEKMGLALNRLAAEDPSFRVRTDEESGQTIIAGMGELHLDIIVDRMKREFGVEATVGKPQVAYRETIRKVCEEIEGKFVKQSGGRGQYGHVVLKIEPQEPGKGFEFIDAIKGGTVPREYIPAVEKGVRETLTSGVLAGYPVVDVKVTLFFGSYHDVDSNENAFRMAASMAFKDGCRKASPVILEPMMAVEVETPEDYAGTVMGDLSSRRGMVQGMDEIAGGGGKIIKAEVPLSEMFGYSTSLRSATQGRATYSMEFKHYSEAPKNVIDAIVTSKAPK.

Residues 8 to 290 (ERYRNIGISA…GVVEYLPSPV (283 aa)) form the tr-type G domain. GTP is bound by residues 17–24 (AHIDAGKT), 88–92 (DTPGH), and 142–145 (NKMD).

This sequence belongs to the TRAFAC class translation factor GTPase superfamily. Classic translation factor GTPase family. EF-G/EF-2 subfamily.

The protein localises to the cytoplasm. Functionally, catalyzes the GTP-dependent ribosomal translocation step during translation elongation. During this step, the ribosome changes from the pre-translocational (PRE) to the post-translocational (POST) state as the newly formed A-site-bound peptidyl-tRNA and P-site-bound deacylated tRNA move to the P and E sites, respectively. Catalyzes the coordinated movement of the two tRNA molecules, the mRNA and conformational changes in the ribosome. In Janthinobacterium sp. (strain Marseille) (Minibacterium massiliensis), this protein is Elongation factor G.